A 216-amino-acid chain; its full sequence is Phosphoenolpyruvate guanylyltransferase (216 aa).

Thr-139, Gly-155, and Ser-158 together coordinate phosphoenolpyruvate.

This sequence belongs to the CofC family.

It carries out the reaction phosphoenolpyruvate + GTP + H(+) = enolpyruvoyl-2-diphospho-5'-guanosine + diphosphate. The protein operates within cofactor biosynthesis; coenzyme F420 biosynthesis. Its function is as follows. Guanylyltransferase that catalyzes the activation of phosphoenolpyruvate (PEP) as enolpyruvoyl-2-diphospho-5'-guanosine, via the condensation of PEP with GTP. It is involved in the biosynthesis of coenzyme F420, a hydride carrier cofactor. The polypeptide is Phosphoenolpyruvate guanylyltransferase (Streptomyces avermitilis (strain ATCC 31267 / DSM 46492 / JCM 5070 / NBRC 14893 / NCIMB 12804 / NRRL 8165 / MA-4680)).